Consider the following 360-residue polypeptide: MKLVFRWYGEKHDTVTLEQIRQIPGVEGVVGALFDIPVGEVWPLEEIMKLKETVEKAGLKLEVIESVNVHEDIKLGLPTRDRYIENYKETIRNLAKAGVKVVCYNFMPVFDWMRTDLHKKLPDGSETMEYDHRLIEGVTPDELIKRVKEGSQGFVLPGWEWDRLEKLRETFELYKNVDEEKLFENLVYFLERVIPVCEECDVKLAIHPDDPPWSIFGLPRIITNKENIERMLKAVDSPYNGITFCMGSLGANPENNIPEMIRYFGKMGRIHFAHVRNLKFTGEKSFYETAHPSFCGSHDLFEVMKAFHDIGYEGYIRPDHGRLIWGEKARPGYGLYDRALGATYILGLWEAIDKMKKRYC.

Belongs to the mannonate dehydratase family. It depends on Fe(2+) as a cofactor. Mn(2+) serves as cofactor.

The catalysed reaction is D-mannonate = 2-dehydro-3-deoxy-D-gluconate + H2O. The protein operates within carbohydrate metabolism; pentose and glucuronate interconversion. In terms of biological role, catalyzes the dehydration of D-mannonate. This Thermotoga sp. (strain RQ2) protein is Mannonate dehydratase.